A 419-amino-acid polypeptide reads, in one-letter code: 5-methylthioadenosine/S-adenosylhomocysteine deaminase (419 aa).

2 residues coordinate Zn(2+): His-58 and His-60. Residues Glu-87 and His-179 each contribute to the substrate site. Residue His-206 coordinates Zn(2+). The substrate site is built by Glu-209 and Asp-294. Asp-294 is a Zn(2+) binding site.

This sequence belongs to the metallo-dependent hydrolases superfamily. MTA/SAH deaminase family. It depends on Zn(2+) as a cofactor.

The catalysed reaction is S-adenosyl-L-homocysteine + H2O + H(+) = S-inosyl-L-homocysteine + NH4(+). It catalyses the reaction S-methyl-5'-thioadenosine + H2O + H(+) = S-methyl-5'-thioinosine + NH4(+). In terms of biological role, catalyzes the deamination of 5-methylthioadenosine and S-adenosyl-L-homocysteine into 5-methylthioinosine and S-inosyl-L-homocysteine, respectively. Is also able to deaminate adenosine. In Pyrococcus furiosus (strain ATCC 43587 / DSM 3638 / JCM 8422 / Vc1), this protein is 5-methylthioadenosine/S-adenosylhomocysteine deaminase.